A 380-amino-acid polypeptide reads, in one-letter code: Tryptophan 2,3-dioxygenase (380 aa).

Residues 57–61 (FIITH) and arginine 128 each bind substrate. Histidine 313 is a heme binding site. Threonine 328 provides a ligand contact to substrate.

It belongs to the tryptophan 2,3-dioxygenase family. As to quaternary structure, homotetramer. Dimer of dimers. It depends on heme as a cofactor.

It carries out the reaction L-tryptophan + O2 = N-formyl-L-kynurenine. The protein operates within amino-acid degradation; L-tryptophan degradation via kynurenine pathway; L-kynurenine from L-tryptophan: step 1/2. It functions in the pathway pigment biosynthesis; ommochrome biosynthesis. Heme-dependent dioxygenase that catalyzes the oxidative cleavage of the L-tryptophan (L-Trp) pyrrole ring and converts L-tryptophan to N-formyl-L-kynurenine. Catalyzes the oxidative cleavage of the indole moiety. In Drosophila mojavensis (Fruit fly), this protein is Tryptophan 2,3-dioxygenase.